A 372-amino-acid polypeptide reads, in one-letter code: Phenylalanine--tRNA ligase alpha subunit (372 aa).

Glutamate 276 is a Mg(2+) binding site.

Belongs to the class-II aminoacyl-tRNA synthetase family. Phe-tRNA synthetase alpha subunit type 1 subfamily. As to quaternary structure, tetramer of two alpha and two beta subunits. Requires Mg(2+) as cofactor.

It localises to the cytoplasm. The catalysed reaction is tRNA(Phe) + L-phenylalanine + ATP = L-phenylalanyl-tRNA(Phe) + AMP + diphosphate + H(+). The protein is Phenylalanine--tRNA ligase alpha subunit of Thermobifida fusca (strain YX).